A 451-amino-acid chain; its full sequence is Heme sensor protein HssS (451 aa).

Transmembrane regions (helical) follow at residues 9 to 29 and 164 to 184; these read IAIYAITVILFSALMSFLFTN and IFLAVLITLLLIISISLVIAS. One can recognise an HAMP domain in the interval 186–238; it reads YSIIKPVTALKNATTRIMKGDFSTPIKQTRHDEIGTLQSRFNTMRQNLGQVDQ. In terms of domain architecture, Histidine kinase spans 246 to 451; it reads NVSHEVKTPL…KTQFIVKLFI (206 aa). His-249 is subject to Phosphohistidine; by autocatalysis.

Post-translationally, autophosphorylated.

The protein localises to the cell membrane. It catalyses the reaction ATP + protein L-histidine = ADP + protein N-phospho-L-histidine.. Its function is as follows. Member of the two-component regulatory system HssS/HssR involved in intracellular heme homeostasis and tempering of staphylococcal virulence. HssS functions as a heme sensor histidine kinase which is autophosphorylated at a histidine residue and transfers its phosphate group to an aspartate residue of HssR. HssR/HssS activates the expression of HrtAB, an efflux pump, in response to extracellular heme, hemin, hemoglobin or blood. The sequence is that of Heme sensor protein HssS (hssS) from Staphylococcus epidermidis (strain ATCC 35984 / DSM 28319 / BCRC 17069 / CCUG 31568 / BM 3577 / RP62A).